Consider the following 697-residue polypeptide: Glycine--tRNA ligase beta subunit (697 aa).

The protein belongs to the class-II aminoacyl-tRNA synthetase family. Tetramer of two alpha and two beta subunits.

The protein localises to the cytoplasm. The enzyme catalyses tRNA(Gly) + glycine + ATP = glycyl-tRNA(Gly) + AMP + diphosphate. The polypeptide is Glycine--tRNA ligase beta subunit (Ralstonia nicotianae (strain ATCC BAA-1114 / GMI1000) (Ralstonia solanacearum)).